Here is a 397-residue protein sequence, read N- to C-terminus: Enoyl-[acyl-carrier-protein] reductase [NADH] FabV (397 aa).

Residues 48–53 (GASTGY), 74–75 (FE), 111–112 (DA), and 139–140 (LA) contribute to the NAD(+) site. Tyrosine 225 provides a ligand contact to substrate. Tyrosine 235 (proton donor) is an active-site residue. NAD(+)-binding positions include lysine 244 and 273–275 (VVT).

The protein belongs to the TER reductase family. As to quaternary structure, monomer.

It carries out the reaction a 2,3-saturated acyl-[ACP] + NAD(+) = a (2E)-enoyl-[ACP] + NADH + H(+). It participates in lipid metabolism; fatty acid biosynthesis. Resistant to triclosan. Involved in the final reduction of the elongation cycle of fatty acid synthesis (FAS II). Catalyzes the NADH-dependent reduction of the carbon-carbon double bond in the enoyl moiety that is covalently linked to an acyl carrier protein (ACP). The protein is Enoyl-[acyl-carrier-protein] reductase [NADH] FabV of Aeromonas salmonicida (strain A449).